A 437-amino-acid chain; its full sequence is Elongation factor 1-gamma (437 aa).

Position 2 is an N-acetylalanine (A2). Positions 2 to 87 (AAGTLYTYPE…YVSNEELRGS (86 aa)) constitute a GST N-terminal domain. The region spanning 88 to 216 (TPEAAAQVVQ…VKLCEKMAQF (129 aa)) is the GST C-terminal domain. 2 positions are modified to N6-acetyllysine: K147 and K212. A compositionally biased stretch (basic and acidic residues) spans 221–254 (FAESQPKKDTPRKEKGSREEKQKPQAERKEEKKA). The tract at residues 221-268 (FAESQPKKDTPRKEKGSREEKQKPQAERKEEKKAAAPAPEEEMDECEQ) is disordered. K253 participates in a covalent cross-link: Glycyl lysine isopeptide (Lys-Gly) (interchain with G-Cter in SUMO1). An EF-1-gamma C-terminal domain is found at 276 to 437 (AKDPFAHLPK…KAFNQGKIFK (162 aa)). A Glycyl lysine isopeptide (Lys-Gly) (interchain with G-Cter in SUMO2) cross-link involves residue K285. K401 carries the post-translational modification N6-acetyllysine. The residue at position 434 (K434) is an N6-acetyllysine; alternate. K434 bears the N6-malonyllysine; alternate mark.

As to quaternary structure, EF-1 is composed of four subunits: alpha, beta, delta, and gamma.

Probably plays a role in anchoring the complex to other cellular components. The chain is Elongation factor 1-gamma (EEF1G) from Equus caballus (Horse).